A 559-amino-acid chain; its full sequence is Nuclear speckle splicing regulatory protein 1 (559 aa).

The segment at 22–57 is disordered; the sequence is VLQKPSVFGNDSDDDDDETSVSESLQREAAKKQAMK. Ser-27 and Ser-33 each carry phosphoserine. Residues 32 to 41 show a composition bias toward acidic residues; the sequence is DSDDDDDETS. The stretch at 105–179 forms a coiled coil; the sequence is IHNLLKAVEI…EARLDVTKQR (75 aa). The tract at residues 107–171 is necessary for alternative splicing activity; the sequence is NLLKAVEIRK…RERRAAALEA (65 aa). The segment at 195–534 is disordered; that stretch reads EEEVPTCSFR…AKRSNEETVT (340 aa). Over residues 204-219 the composition is skewed to basic and acidic residues; sequence REARSEIKEEKSKGYS. Lys-211 participates in a covalent cross-link: Glycyl lysine isopeptide (Lys-Gly) (interchain with G-Cter in SUMO2). Ser-249, Ser-255, and Ser-256 each carry phosphoserine. Over residues 251–274 the composition is skewed to basic and acidic residues; that stretch reads FDAKSSENDEMEGDKGNCRREKGT. Thr-276 carries the post-translational modification Phosphothreonine. Lys-282 is covalently cross-linked (Glycyl lysine isopeptide (Lys-Gly) (interchain with G-Cter in SUMO2)). 3 stretches are compositionally biased toward basic and acidic residues: residues 314–343, 351–488, and 502–521; these read EKRE…EKRD, SHRD…RNPE, and RITE…HETV. Positions 379-428 form a coiled coil; it reads KREKDREKYPSREQERHRQRNNYDRHNEKGCEKEEKSKEKEEHVKARKER. The residue at position 458 (Ser-458) is a Phosphoserine.

The protein belongs to the NSRP1 family. As to quaternary structure, interacts (via C-terminus) with SRSF1. Interacts (via C-terminus) with SRSF2.

It is found in the nucleus. The protein localises to the nucleus speckle. In terms of biological role, RNA-binding protein that mediates pre-mRNA alternative splicing regulation. This is Nuclear speckle splicing regulatory protein 1 (NSRP1) from Bos taurus (Bovine).